The following is a 98-amino-acid chain: NADH-ubiquinone oxidoreductase chain 4L (98 aa).

Transmembrane regions (helical) follow at residues 1–21 (MSIT…GLLM), 29–49 (SLLC…MAIL), and 61–81 (IILL…LVMV).

Belongs to the complex I subunit 4L family. As to quaternary structure, core subunit of respiratory chain NADH dehydrogenase (Complex I) which is composed of 45 different subunits.

The protein resides in the mitochondrion inner membrane. It carries out the reaction a ubiquinone + NADH + 5 H(+)(in) = a ubiquinol + NAD(+) + 4 H(+)(out). In terms of biological role, core subunit of the mitochondrial membrane respiratory chain NADH dehydrogenase (Complex I) which catalyzes electron transfer from NADH through the respiratory chain, using ubiquinone as an electron acceptor. Part of the enzyme membrane arm which is embedded in the lipid bilayer and involved in proton translocation. In Mesophylla macconnelli (MacConnell's bat), this protein is NADH-ubiquinone oxidoreductase chain 4L (MT-ND4L).